We begin with the raw amino-acid sequence, 436 residues long: 3-ketoacyl-CoA thiolase (436 aa).

Cys-99 functions as the Acyl-thioester intermediate in the catalytic mechanism. Catalysis depends on proton acceptor residues His-392 and Cys-422.

It belongs to the thiolase-like superfamily. Thiolase family. As to quaternary structure, heterotetramer of two alpha chains (FadJ) and two beta chains (FadI).

The protein localises to the cytoplasm. The enzyme catalyses an acyl-CoA + acetyl-CoA = a 3-oxoacyl-CoA + CoA. The protein operates within lipid metabolism; fatty acid beta-oxidation. Catalyzes the final step of fatty acid oxidation in which acetyl-CoA is released and the CoA ester of a fatty acid two carbons shorter is formed. The polypeptide is 3-ketoacyl-CoA thiolase (Shewanella piezotolerans (strain WP3 / JCM 13877)).